The following is a 599-amino-acid chain: Elongation factor 4 (599 aa).

One can recognise a tr-type G domain in the interval 4–186 (EHIRNFSIIA…EIVKKIPPPQ (183 aa)). GTP contacts are provided by residues 16–21 (DHGKST) and 133–136 (NKID).

It belongs to the TRAFAC class translation factor GTPase superfamily. Classic translation factor GTPase family. LepA subfamily.

The protein localises to the cell inner membrane. The catalysed reaction is GTP + H2O = GDP + phosphate + H(+). Functionally, required for accurate and efficient protein synthesis under certain stress conditions. May act as a fidelity factor of the translation reaction, by catalyzing a one-codon backward translocation of tRNAs on improperly translocated ribosomes. Back-translocation proceeds from a post-translocation (POST) complex to a pre-translocation (PRE) complex, thus giving elongation factor G a second chance to translocate the tRNAs correctly. Binds to ribosomes in a GTP-dependent manner. The polypeptide is Elongation factor 4 (Geobacter sp. (strain M21)).